The primary structure comprises 296 residues: Acetylglutamate kinase (296 aa).

Substrate contacts are provided by residues 69–70 (GG), arginine 91, and asparagine 192.

It belongs to the acetylglutamate kinase family. ArgB subfamily.

The protein resides in the cytoplasm. It carries out the reaction N-acetyl-L-glutamate + ATP = N-acetyl-L-glutamyl 5-phosphate + ADP. It participates in amino-acid biosynthesis; L-arginine biosynthesis; N(2)-acetyl-L-ornithine from L-glutamate: step 2/4. Catalyzes the ATP-dependent phosphorylation of N-acetyl-L-glutamate. In Ruthia magnifica subsp. Calyptogena magnifica, this protein is Acetylglutamate kinase.